A 228-amino-acid chain; its full sequence is Lipoprotein-releasing system ATP-binding protein LolD (228 aa).

Positions 6 to 228 (LRCKELSKSY…KNGILHKEQG (223 aa)) constitute an ABC transporter domain. 42-49 (GASGSGKS) provides a ligand contact to ATP.

The protein belongs to the ABC transporter superfamily. Lipoprotein translocase (TC 3.A.1.125) family. The complex is composed of two ATP-binding proteins (LolD) and two transmembrane proteins (LolC and LolE).

Its subcellular location is the cell inner membrane. Part of the ABC transporter complex LolCDE involved in the translocation of mature outer membrane-directed lipoproteins, from the inner membrane to the periplasmic chaperone, LolA. Responsible for the formation of the LolA-lipoprotein complex in an ATP-dependent manner. This Idiomarina loihiensis (strain ATCC BAA-735 / DSM 15497 / L2-TR) protein is Lipoprotein-releasing system ATP-binding protein LolD.